The chain runs to 366 residues: 8-hydroxyquercetin 8-O-methyltransferase (366 aa).

S-adenosyl-L-methionine-binding positions include 207-210 (VGGG), 231-232 (DL), 251-252 (DM), and K265. The active-site Proton acceptor is the H269.

The protein belongs to the class I-like SAM-binding methyltransferase superfamily. Cation-independent O-methyltransferase family. COMT subfamily. As to quaternary structure, homodimer.

It carries out the reaction 3,3',4',5,7,8-hexahydroxyflavone + S-adenosyl-L-methionine = 3,3',4',5,7-pentahydroxy-8-methoxyflavone + S-adenosyl-L-homocysteine + H(+). The enzyme catalyses 4',7,8-trihydroxyflavone + S-adenosyl-L-methionine = 4',7-dihydroxy-8-methoxyflavone + S-adenosyl-L-homocysteine + H(+). The catalysed reaction is 8-hydroxy-7-methoxyflavone + S-adenosyl-L-methionine = 7,8-dimethoxyflavone + S-adenosyl-L-homocysteine + H(+). Its pathway is flavonoid metabolism. Its function is as follows. Flavonoid 8-O-methyltransferase involved in the biosynthesis of polymethoxylated flavonoids natural products such as pebrellin, aroma compounds which contribute to the flavor of peppermint, and exhibit pharmacological activities such as anti-allergic, anti-oxidant, antibacterial, anti-proliferative, and anti-inflammatory effects. Catalyzes S-adenosylmethionine-dependent regioselective 8-O-methylation of flavonoids; active on various hydroxylated flavonoid substrates, including 7,8,3'4'-tetrahydroxy-flavone, 7,8,4'-trihydroxy-flavone and 8-hydroxy-flavone 7-methyl ether. The sequence is that of 8-hydroxyquercetin 8-O-methyltransferase from Mentha piperita (Peppermint).